The chain runs to 171 residues: Endoribonuclease ToxN (171 aa).

It belongs to the ToxN/AbiQ toxin family. In terms of assembly, one ToxN monomer binds to a 36-nt-long single repeat of the ToxI RNA; this complex forms a triangular heterohexameric complex with ToxN connected by the ToxI RNA to another toxin molecule. The ToxI repeat forms a pseudoknot which occludes the toxin active site. Interaction of ToxI with ToxN partially inhibits the latter's endoribonuclease activity in vitro. The complex self-assembles in vitro with either full-length or processed single repeats; during the process the precursor is processed.

Functionally, toxic component of a type III toxin-antitoxin (TA) system. An endoribonuclease which is active independently of the ribosome, cleaving between the second and third A of AAA(U/G) sequences, although not all occurrences of this tetranucleotide are cleaved. Digests many mRNA species, including its own transcript and its cognate antitoxin RNA ToxI. ToxI has 5.5 nearly identical 36 nucleotide-long repeats (a single repeat neutralizes the toxin in vivo); a single repeat folds into a pseudoknot which binds the toxin. The ToxI precursor RNA is a preferential target in vivo and is progressively degraded to single repeat lengths as ToxN-ToxI complex self-assembly occurs. In vivo expression of ToxI antitoxin inhibits endonuclease activity of ToxN. The toxin alone inhibits growth when expressed in E.coli without causing cell lysis; this bacteriostatic effect is neutralized by cognate RNA antitoxin ToxI. Non-cognate antitoxin RNA from B.thuringiensis does not inhibit this toxin. The RNA antitoxin is less stable than the proteinaceous toxin; synthesis of ToxI in the absence of new ToxN synthesis restores growth and also detectable accumulation of the ToxN protein. Negatively regulates its own operon in complex with ToxI. The toxin-antitoxin system functions in plasmid maintenance (a plasmid addiction system). The TA system protects P.atrosepticum strain 1043 against phage phiM1 and phiA2, E.coli against some but not all coliphages and S.marcescens against some bacteriophages, causing an abortive infection (Abi phenotype). Also protects P.atrosepticum strain 1043 against phage phiTE; phage that escape Abi and grow in this bacterium have evolved a pseudo-ToxI RNA by expanding a pre-existing sequence similar to the bona fide ToxI repeats. The sequence is that of Endoribonuclease ToxN from Pectobacterium atrosepticum (Erwinia carotovora subsp. atroseptica).